The primary structure comprises 542 residues: Berberine bridge enzyme-like 25 (542 aa).

An N-terminal signal peptide occupies residues 1 to 30 (MGNSKPLPTISCISVFALYFSFYTITLTSS). Cys-40 and Cys-104 are joined by a disulfide. Residue Asn-61 is glycosylated (N-linked (GlcNAc...) asparagine). The 177-residue stretch at 82–258 (TMPKPGFIFK…LSWKIKLVPV (177 aa)) folds into the FAD-binding PCMH-type domain. His-119 carries the pros-8alpha-FAD histidine modification. N-linked (GlcNAc...) asparagine glycosylation is found at Asn-308 and Asn-436.

Belongs to the oxygen-dependent FAD-linked oxidoreductase family. Requires FAD as cofactor.

It localises to the secreted. The protein resides in the cell wall. The chain is Berberine bridge enzyme-like 25 from Arabidopsis thaliana (Mouse-ear cress).